The chain runs to 383 residues: ATP phosphoribosyltransferase regulatory subunit (383 aa).

The protein belongs to the class-II aminoacyl-tRNA synthetase family. HisZ subfamily. In terms of assembly, heteromultimer composed of HisG and HisZ subunits.

Its subcellular location is the cytoplasm. It functions in the pathway amino-acid biosynthesis; L-histidine biosynthesis; L-histidine from 5-phospho-alpha-D-ribose 1-diphosphate: step 1/9. Its function is as follows. Required for the first step of histidine biosynthesis. May allow the feedback regulation of ATP phosphoribosyltransferase activity by histidine. The polypeptide is ATP phosphoribosyltransferase regulatory subunit (Neisseria gonorrhoeae (strain ATCC 700825 / FA 1090)).